Here is a 285-residue protein sequence, read N- to C-terminus: CCR4-NOT transcription complex subunit 7 (285 aa).

Residues Asp40, Glu42, Asp161, Asp230, and Glu278 each contribute to the a divalent metal cation site.

Belongs to the CAF1 family. As to quaternary structure, component of the CCR4-NOT complex. Mn(2+) serves as cofactor. Requires Mg(2+) as cofactor. It depends on Co(2+) as a cofactor.

It is found in the nucleus. The protein localises to the cytoplasm. It carries out the reaction Exonucleolytic cleavage of poly(A) to 5'-AMP.. In terms of biological role, has 3'-5' poly(A) exoribonuclease activity for synthetic poly(A) RNA substrate. Catalytic component of the CCR4-NOT complex which is one of the major cellular mRNA deadenylases and is linked to various cellular processes including bulk mRNA degradation, miRNA-mediated repression, translational repression during translational initiation and general transcription regulation. During miRNA-mediated repression the complex also seems to act as translational repressor during translational initiation. Additional complex functions may be a consequence of its influence on mRNA expression. This chain is CCR4-NOT transcription complex subunit 7 (cnot7), found in Xenopus laevis (African clawed frog).